Consider the following 439-residue polypeptide: Serine hydroxymethyltransferase (439 aa).

The interval 1–20 (MNAPHRDETTASHRDDGFFT) is disordered. (6S)-5,6,7,8-tetrahydrofolate-binding positions include Leu-136 and 140 to 142 (GHL). Lys-245 carries the N6-(pyridoxal phosphate)lysine modification.

It belongs to the SHMT family. Homodimer. The cofactor is pyridoxal 5'-phosphate.

It is found in the cytoplasm. The enzyme catalyses (6R)-5,10-methylene-5,6,7,8-tetrahydrofolate + glycine + H2O = (6S)-5,6,7,8-tetrahydrofolate + L-serine. It functions in the pathway one-carbon metabolism; tetrahydrofolate interconversion. It participates in amino-acid biosynthesis; glycine biosynthesis; glycine from L-serine: step 1/1. Catalyzes the reversible interconversion of serine and glycine with tetrahydrofolate (THF) serving as the one-carbon carrier. This reaction serves as the major source of one-carbon groups required for the biosynthesis of purines, thymidylate, methionine, and other important biomolecules. Also exhibits THF-independent aldolase activity toward beta-hydroxyamino acids, producing glycine and aldehydes, via a retro-aldol mechanism. This Jannaschia sp. (strain CCS1) protein is Serine hydroxymethyltransferase.